Reading from the N-terminus, the 196-residue chain is Phosphoheptose isomerase (196 aa).

Positions 36-196 constitute an SIS domain; that stretch reads MAQALQAEGK…LIDQHLFGGA (161 aa). Residue 51–53 coordinates substrate; the sequence is NGG. 2 residues coordinate Zn(2+): His60 and Glu64. Substrate contacts are provided by residues Glu64, 93 to 94, 119 to 121, Ser124, and Gln174; these read ND and STS. 2 residues coordinate Zn(2+): Gln174 and His182.

This sequence belongs to the SIS family. GmhA subfamily. Homotetramer. Zn(2+) is required as a cofactor.

It localises to the cytoplasm. The enzyme catalyses 2 D-sedoheptulose 7-phosphate = D-glycero-alpha-D-manno-heptose 7-phosphate + D-glycero-beta-D-manno-heptose 7-phosphate. It functions in the pathway carbohydrate biosynthesis; D-glycero-D-manno-heptose 7-phosphate biosynthesis; D-glycero-alpha-D-manno-heptose 7-phosphate and D-glycero-beta-D-manno-heptose 7-phosphate from sedoheptulose 7-phosphate: step 1/1. In terms of biological role, catalyzes the isomerization of sedoheptulose 7-phosphate in D-glycero-D-manno-heptose 7-phosphate. The chain is Phosphoheptose isomerase from Alkalilimnicola ehrlichii (strain ATCC BAA-1101 / DSM 17681 / MLHE-1).